We begin with the raw amino-acid sequence, 31 residues long: Cytochrome b6-f complex subunit 6 (31 aa).

The chain crosses the membrane as a helical span at residues 4 to 24 (ITSYFGFLLAALTITSALFIG).

It belongs to the PetL family. As to quaternary structure, the 4 large subunits of the cytochrome b6-f complex are cytochrome b6, subunit IV (17 kDa polypeptide, PetD), cytochrome f and the Rieske protein, while the 4 small subunits are PetG, PetL, PetM and PetN. The complex functions as a dimer.

It localises to the plastid. It is found in the chloroplast thylakoid membrane. Functionally, component of the cytochrome b6-f complex, which mediates electron transfer between photosystem II (PSII) and photosystem I (PSI), cyclic electron flow around PSI, and state transitions. PetL is important for photoautotrophic growth as well as for electron transfer efficiency and stability of the cytochrome b6-f complex. The sequence is that of Cytochrome b6-f complex subunit 6 from Hamamelis virginiana (Witch-hazel).